A 360-amino-acid polypeptide reads, in one-letter code: 3-dehydroquinate synthase (360 aa).

Residues 71–76 (DGEQYK), 105–109 (GVVGD), 129–130 (TT), K142, K151, and 169–172 (TLNT) contribute to the NAD(+) site. Zn(2+) contacts are provided by E184, H248, and H265.

Belongs to the sugar phosphate cyclases superfamily. Dehydroquinate synthase family. Co(2+) serves as cofactor. The cofactor is Zn(2+). It depends on NAD(+) as a cofactor.

Its subcellular location is the cytoplasm. The catalysed reaction is 7-phospho-2-dehydro-3-deoxy-D-arabino-heptonate = 3-dehydroquinate + phosphate. It functions in the pathway metabolic intermediate biosynthesis; chorismate biosynthesis; chorismate from D-erythrose 4-phosphate and phosphoenolpyruvate: step 2/7. Catalyzes the conversion of 3-deoxy-D-arabino-heptulosonate 7-phosphate (DAHP) to dehydroquinate (DHQ). This chain is 3-dehydroquinate synthase, found in Coxiella burnetii (strain RSA 331 / Henzerling II).